A 423-amino-acid polypeptide reads, in one-letter code: Protein FAM43A (423 aa).

Residues 263–283 (EQELQEEEEEEQPEGCPEEEE) are compositionally biased toward acidic residues. Disordered stretches follow at residues 263–298 (EQEL…EAEA), 321–344 (RGEA…LLLG), and 382–423 (LSGD…PHSG). A compositionally biased stretch (gly residues) spans 323–335 (EALGGGGGSLGPG). The segment covering 383 to 393 (SGDSTGSESSI) has biased composition (low complexity). The span at 401–411 (TSATAGDSSRQ) shows a compositional bias: polar residues.

Belongs to the FAM43 family.

The sequence is that of Protein FAM43A (FAM43A) from Homo sapiens (Human).